Reading from the N-terminus, the 853-residue chain is DNA mismatch repair protein MutS (853 aa).

Residue 614–621 (GPNMGGKS) coordinates ATP.

The protein belongs to the DNA mismatch repair MutS family.

This protein is involved in the repair of mismatches in DNA. It is possible that it carries out the mismatch recognition step. This protein has a weak ATPase activity. The protein is DNA mismatch repair protein MutS of Escherichia coli (strain SMS-3-5 / SECEC).